A 1339-amino-acid chain; its full sequence is Aldehyde oxidase 1 (1339 aa).

One can recognise a 2Fe-2S ferredoxin-type domain in the interval serine 5–isoleucine 92. Cysteine 44, cysteine 49, cysteine 52, and cysteine 74 together coordinate [2Fe-2S] cluster. Glutamine 113 contributes to the Mo-molybdopterin binding site. Cysteine 114, cysteine 117, cysteine 149, and cysteine 151 together coordinate [2Fe-2S] cluster. Cysteine 151 contributes to the Mo-molybdopterin binding site. One can recognise an FAD-binding PCMH-type domain in the interval phenylalanine 236 to lysine 421. FAD contacts are provided by residues valine 264–valine 271, alanine 345, serine 354, histidine 358, aspartate 367, and leucine 411. Mo-molybdopterin contacts are provided by residues alanine 807–phenylalanine 808 and methionine 1048. Phosphoserine is present on serine 1069. Residues glycine 1089–valine 1092, glutamine 1204, and leucine 1269 contribute to the Mo-molybdopterin site. The active-site Proton acceptor; for azaheterocycle hydroxylase activity is glutamate 1271.

Belongs to the xanthine dehydrogenase family. Homodimer. Requires [2Fe-2S] cluster as cofactor. FAD serves as cofactor. The cofactor is Mo-molybdopterin. In terms of processing, the N-terminus is blocked. As to expression, expressed at high levels in liver, lung and spleen. Also expressed in kindey, eye, testis, duodenum, esophagus and thymus (at protein level).

It localises to the cytoplasm. The catalysed reaction is an aldehyde + O2 + H2O = a carboxylate + H2O2 + H(+). It catalyses the reaction retinal + O2 + H2O = retinoate + H2O2 + H(+). Oxidase with broad substrate specificity, oxidizing aromatic azaheterocycles, such as N1-methylnicotinamide, N-methylphthalazinium and phthalazine, as well as aldehydes, such as benzaldehyde, retinal, pyridoxal, and vanillin. Plays a key role in the metabolism of xenobiotics and drugs containing aromatic azaheterocyclic substituents. Is probably involved in the regulation of reactive oxygen species homeostasis. May be a prominent source of superoxide generation via the one-electron reduction of molecular oxygen. May also catalyze nitric oxide (NO) production via the reduction of nitrite to NO with NADH or aldehyde as electron donor. May play a role in adipogenesis. The sequence is that of Aldehyde oxidase 1 from Bos taurus (Bovine).